A 380-amino-acid chain; its full sequence is RNA-binding motif protein, Y chromosome, family 9 (380 aa).

The RRM domain maps to 8-86; sequence GKIFIGGLNI…KRIKVKQARR (79 aa). 2 disordered regions span residues 82 to 226 and 279 to 358; these read KQAR…STSR and HEAP…YSAS. A compositionally biased stretch (polar residues) spans 166 to 178; that stretch reads RSATSAQTRSNTG. Basic and acidic residues-rich tracts occupy residues 180-190 and 333-351; these read RGREPHRREIS and IDRE…HSPK.

In terms of tissue distribution, testis-specific.

The protein resides in the nucleus. Its function is as follows. RNA-binding protein which may be involved in spermatogenesis. May be required for sperm development, possibly by participating in pre-mRNA splicing in the testis. This chain is RNA-binding motif protein, Y chromosome, family 9, found in Mus musculus (Mouse).